The primary structure comprises 101 residues: Large ribosomal subunit protein bL9m (101 aa).

A mitochondrion-targeting transit peptide spans 1 to 32 (MSIMKPTTRFFRFNSLELAVSPFQRIYGQLRF).

The protein belongs to the bacterial ribosomal protein bL9 family. In terms of assembly, component of the mitochondrial large ribosomal subunit (mt-LSU). Mature yeast 74S mitochondrial ribosomes consist of a small (37S) and a large (54S) subunit. The 37S small subunit contains a 15S ribosomal RNA (15S mt-rRNA) and at least 32 different proteins. The 54S large subunit contains a 21S rRNA (21S mt-rRNA) and at least 45 different proteins.

The protein resides in the mitochondrion. Component of the mitochondrial ribosome (mitoribosome), a dedicated translation machinery responsible for the synthesis of mitochondrial genome-encoded proteins, including at least some of the essential transmembrane subunits of the mitochondrial respiratory chain. The mitoribosomes are attached to the mitochondrial inner membrane and translation products are cotranslationally integrated into the membrane. This Schizosaccharomyces pombe (strain 972 / ATCC 24843) (Fission yeast) protein is Large ribosomal subunit protein bL9m.